Consider the following 599-residue polypeptide: NTPase KAP family P-loop domain-containing protein 1 (599 aa).

One can recognise a KAP NTPase domain in the interval 1–416; the sequence is MQQEAAQRES…NTVPITVRLL (416 aa). The next 3 membrane-spanning stretches (helical) occupy residues 25 to 45, 119 to 139, and 156 to 176; these read GWGV…ITEL, VCLA…LLYL, and ALGG…VYSV. The segment at 543–599 is disordered; the sequence is ALKPPSPPKSPSQDGPQASPRAIIAAGTSHAGQGSGHSKEAHQTRDRTHGGKPRPMA. The span at 579–591 shows a compositional bias: basic and acidic residues; that stretch reads HSKEAHQTRDRTH.

It is found in the membrane. The polypeptide is NTPase KAP family P-loop domain-containing protein 1 (Nkpd1) (Mus musculus (Mouse)).